The sequence spans 221 residues: uncharacterized protein (221 aa).

Residues 33–167 (RPAKSAVMLY…VSPGANLELL (135 aa)) form the MOSC domain.

This is an uncharacterized protein from Bacillus subtilis (strain 168).